Consider the following 368-residue polypeptide: Glutaminyl-peptide cyclotransferase (368 aa).

The signal sequence occupies residues 1–23; sequence MAGERRDSKAAAFFCLAWALCLA. Residue Asn-53 is glycosylated (N-linked (GlcNAc...) asparagine). A disulfide bridge links Cys-143 with Cys-169. A Zn(2+)-binding site is contributed by Asp-164. The Proton acceptor role is filled by Glu-207. Residue Glu-208 participates in Zn(2+) binding. Asp-254 acts as the Proton acceptor in catalysis. The N-linked (GlcNAc...) asparagine glycan is linked to Asn-292. His-336 provides a ligand contact to Zn(2+). Asn-352 carries an N-linked (GlcNAc...) asparagine glycan.

Belongs to the glutaminyl-peptide cyclotransferase family. In terms of tissue distribution, expressed by the venom gland.

The protein localises to the secreted. The catalysed reaction is N-terminal L-glutaminyl-[peptide] = N-terminal 5-oxo-L-prolyl-[peptide] + NH4(+). Functionally, responsible for the biosynthesis of pyroglutamyl peptides. Has a bias against acidic and tryptophan residues adjacent to the N-terminal glutaminyl residue and a lack of importance of chain length after the second residue. Also catalyzes N-terminal pyroglutamate formation. The sequence is that of Glutaminyl-peptide cyclotransferase (QPCT) from Boiga irregularis (Brown tree snake).